The following is a 396-amino-acid chain: Diphosphomevalonate decarboxylase (396 aa).

(R)-5-diphosphomevalonate is bound by residues 19-22, Arg74, 153-158, and Thr209; these read YWGK and SGSACR.

Belongs to the diphosphomevalonate decarboxylase family. In terms of assembly, homodimer.

It catalyses the reaction (R)-5-diphosphomevalonate + ATP = isopentenyl diphosphate + ADP + phosphate + CO2. The protein operates within isoprenoid biosynthesis; isopentenyl diphosphate biosynthesis via mevalonate pathway; isopentenyl diphosphate from (R)-mevalonate: step 3/3. Diphosphomevalonate decarboxylase; part of the second module of ergosterol biosynthesis pathway that includes the middle steps of the pathway. MVD1/ERG19 converts diphosphomevalonate into isopentenyl diphosphate. The second module is carried out in the vacuole and involves the formation of farnesyl diphosphate, which is also an important intermediate in the biosynthesis of ubiquinone, dolichol, heme and prenylated proteins. Activity by the mevalonate kinase ERG12 first converts mevalonate into 5-phosphomevalonate. 5-phosphomevalonate is then further converted to 5-diphosphomevalonate by the phosphomevalonate kinase ERG8. The diphosphomevalonate decarboxylase MVD1/ERG19 then produces isopentenyl diphosphate. The isopentenyl-diphosphate delta-isomerase IDI1 then catalyzes the 1,3-allylic rearrangement of the homoallylic substrate isopentenyl (IPP) to its highly electrophilic allylic isomer, dimethylallyl diphosphate (DMAPP). Finally the farnesyl diphosphate synthase ERG20 catalyzes the sequential condensation of isopentenyl pyrophosphate with dimethylallyl pyrophosphate, and then with the resultant geranylpyrophosphate to the ultimate product farnesyl pyrophosphate. The polypeptide is Diphosphomevalonate decarboxylase (Saccharomyces cerevisiae (strain ATCC 204508 / S288c) (Baker's yeast)).